Here is a 105-residue protein sequence, read N- to C-terminus: Thioredoxin-like protein slr0233 (105 aa).

The Thioredoxin domain maps to 1–102 (MAVKKQFANF…QAAQLIQQLQ (102 aa)). A disulfide bridge connects residues C30 and C33.

The protein belongs to the thioredoxin family.

This Synechocystis sp. (strain ATCC 27184 / PCC 6803 / Kazusa) protein is Thioredoxin-like protein slr0233.